Here is a 131-residue protein sequence, read N- to C-terminus: ATP synthase epsilon chain, chloroplastic (131 aa).

The protein belongs to the ATPase epsilon chain family. In terms of assembly, F-type ATPases have 2 components, CF(1) - the catalytic core - and CF(0) - the membrane proton channel. CF(1) has five subunits: alpha(3), beta(3), gamma(1), delta(1), epsilon(1). CF(0) has three main subunits: a, b and c.

Its subcellular location is the plastid. The protein resides in the chloroplast thylakoid membrane. Functionally, produces ATP from ADP in the presence of a proton gradient across the membrane. This chain is ATP synthase epsilon chain, chloroplastic, found in Guillardia theta (Cryptophyte).